Reading from the N-terminus, the 88-residue chain is Acyl carrier protein (88 aa).

In terms of domain architecture, Carrier spans 4–79 (DSVPAKVMEI…AAVDYIQNKM (76 aa)). Serine 39 is modified (O-(pantetheine 4'-phosphoryl)serine).

Belongs to the acyl carrier protein (ACP) family. Post-translationally, 4'-phosphopantetheine is transferred from CoA to a specific serine of apo-ACP by AcpS. This modification is essential for activity because fatty acids are bound in thioester linkage to the sulfhydryl of the prosthetic group.

The protein localises to the cytoplasm. Its pathway is lipid metabolism; fatty acid biosynthesis. In terms of biological role, carrier of the growing fatty acid chain in fatty acid biosynthesis. The sequence is that of Acyl carrier protein from Trichodesmium erythraeum (strain IMS101).